The primary structure comprises 1113 residues: StAR-related lipid transfer protein 13 (1113 aa).

Position 1 is an N-acetylmethionine (methionine 1). Positions 55 to 122 constitute an SAM domain; the sequence is QQEIEAKEAC…LNKCASMRLD (68 aa). 3 disordered regions span residues 164 to 218, 230 to 256, and 308 to 343; these read PVAD…HSAD, SSLP…RTRA, and NGDL…STVS. The span at 179 to 188 shows a compositional bias: polar residues; sequence NTASSESVLT. A compositionally biased stretch (low complexity) spans 197–214; it reads SIHSESSGGSDSRSQSGH. A compositionally biased stretch (polar residues) spans 230-245; the sequence is SSLPQSTREGLNQSFH. Positions 322–340 are enriched in low complexity; that stretch reads GLPCSSKSSGESSPLENSS. Position 411 is a phosphoserine (serine 411). Polar residues-rich tracts occupy residues 421-435 and 529-549; these read SNGV…SLGR and PNQV…TTPS. Disordered stretches follow at residues 421 to 443 and 514 to 578; these read SNGV…GMRE and HSTL…GASL. The 206-residue stretch at 663 to 868 folds into the Rho-GAP domain; sequence VPLIVHVQRT…HMITECNRLF (206 aa). In terms of domain architecture, START spans 899-1109; that stretch reads LAESGATFHT…SFQPLVAEGP (211 aa).

Homodimer. Interacts with TAX1BP1.

Its subcellular location is the cytoplasm. It localises to the membrane. The protein localises to the mitochondrion membrane. The protein resides in the lipid droplet. Its function is as follows. May function as a GTPase-activating protein. This Mus musculus (Mouse) protein is StAR-related lipid transfer protein 13 (Stard13).